A 384-amino-acid chain; its full sequence is L-cysteine:1D-myo-inositol 2-amino-2-deoxy-alpha-D-glucopyranoside ligase (384 aa).

Cys-16 provides a ligand contact to Zn(2+). L-cysteinyl-5'-AMP is bound by residues 16 to 19, Thr-31, and 54 to 56; these read CGIT and NVT. The 'HIGH' region signature appears at 18-28; the sequence is ITPYDATHLGH. Residues 159-164 carry the 'ERGGDP' region motif; it reads ERGGDP. Residue Trp-199 coordinates L-cysteinyl-5'-AMP. Position 203 (Cys-203) interacts with Zn(2+). 221-223 lines the L-cysteinyl-5'-AMP pocket; that stretch reads GSD. Residue His-228 participates in Zn(2+) binding. Residue Ile-255 participates in L-cysteinyl-5'-AMP binding. The short motif at 261–265 is the 'KMSKS' region element; the sequence is KMSKS.

This sequence belongs to the class-I aminoacyl-tRNA synthetase family. MshC subfamily. As to quaternary structure, monomer. Requires Zn(2+) as cofactor.

It carries out the reaction 1D-myo-inositol 2-amino-2-deoxy-alpha-D-glucopyranoside + L-cysteine + ATP = 1D-myo-inositol 2-(L-cysteinylamino)-2-deoxy-alpha-D-glucopyranoside + AMP + diphosphate + H(+). Functionally, catalyzes the ATP-dependent condensation of GlcN-Ins and L-cysteine to form L-Cys-GlcN-Ins. This Mycobacterium avium (strain 104) protein is L-cysteine:1D-myo-inositol 2-amino-2-deoxy-alpha-D-glucopyranoside ligase.